A 611-amino-acid polypeptide reads, in one-letter code: Oxidoreductase cicC (611 aa).

The N-terminal stretch at 1–20 (MALRYLNKFSLLSLAVPTLA) is a signal peptide. FAD-binding positions include 45–46 (NA) and 65–66 (EA). N-linked (GlcNAc...) asparagine glycans are attached at residues Asn-76 and Asn-113. FAD contacts are provided by residues Val-123 and 131–134 (NLMT). N-linked (GlcNAc...) asparagine glycans are attached at residues Asn-282, Asn-410, and Asn-475. The Proton acceptor role is filled by His-547. His-547 functions as the Proton donor in the catalytic mechanism. Ala-581 contacts FAD. The Proton acceptor role is filled by His-591. Residue 592–593 (PI) participates in FAD binding.

This sequence belongs to the GMC oxidoreductase family. FAD serves as cofactor.

The protein operates within phytotoxin biosynthesis. In terms of biological role, oxidoreductase; part of the gene cluster that mediates the biosynthesis of cichorine, a phytotoxin active against knapweed, corn, and soybeans. The first step in the pathway is performed by the non-reducing polyketide synthase pkbA that condenses one acetyl-CoA starter unit with 3 malonyl-CoA units. PkbA also catalyzes one methylation step to produce 3-methylorsellinate. The nonribosomal peptide synthase-like protein cicB, the cytochrome P450 monooxygenase cicH and the O-methyltransferase cicE are involved in the conversion of 3-methylorsellinate into nidulol. CicB converts 3-methylorsellinate to a yet unidentified intermediate, cicH may play a ring-closing role for cichorine and cicE is plausibly responsible for the methylation of one of the phenol groups. The oxidoreductase cicC acts downstream with still unidentified enzymes to further convert nidulol into cichorine. In Emericella nidulans (strain FGSC A4 / ATCC 38163 / CBS 112.46 / NRRL 194 / M139) (Aspergillus nidulans), this protein is Oxidoreductase cicC.